Consider the following 340-residue polypeptide: tRNA N6-adenosine threonylcarbamoyltransferase (340 aa).

Residues H114 and H118 each coordinate Fe cation. Residues 140–144 (TISGG), D173, G186, D190, and N281 contribute to the substrate site. Residue D309 participates in Fe cation binding.

It belongs to the KAE1 / TsaD family. The cofactor is Fe(2+).

It localises to the cytoplasm. It carries out the reaction L-threonylcarbamoyladenylate + adenosine(37) in tRNA = N(6)-L-threonylcarbamoyladenosine(37) in tRNA + AMP + H(+). Its function is as follows. Required for the formation of a threonylcarbamoyl group on adenosine at position 37 (t(6)A37) in tRNAs that read codons beginning with adenine. Is involved in the transfer of the threonylcarbamoyl moiety of threonylcarbamoyl-AMP (TC-AMP) to the N6 group of A37, together with TsaE and TsaB. TsaD likely plays a direct catalytic role in this reaction. The polypeptide is tRNA N6-adenosine threonylcarbamoyltransferase (Christiangramia forsetii (strain DSM 17595 / CGMCC 1.15422 / KT0803) (Gramella forsetii)).